The sequence spans 304 residues: Protease HtpX homolog (304 aa).

2 helical membrane-spanning segments follow: residues 14 to 34 (VFII…IGII) and 39 to 59 (YLNG…IMVM). His144 serves as a coordination point for Zn(2+). Glu145 is a catalytic residue. A Zn(2+)-binding site is contributed by His148. 2 helical membrane-spanning segments follow: residues 159–179 (IAIA…RLIF) and 202–222 (IIIY…ATAI). Residue Glu231 participates in Zn(2+) binding. The interval 275–304 (SSPLKSKKDKPGLFDSHPPISSRIERLENM) is disordered.

It belongs to the peptidase M48B family. Zn(2+) is required as a cofactor.

It localises to the cell membrane. This Listeria innocua serovar 6a (strain ATCC BAA-680 / CLIP 11262) protein is Protease HtpX homolog.